Here is a 365-residue protein sequence, read N- to C-terminus: Holliday junction branch migration complex subunit RuvB (365 aa).

Positions 1–191 (MSPELGGGYD…FGFTAHMDFY (191 aa)) are large ATPase domain (RuvB-L). ATP is bound by residues leucine 30, arginine 31, glycine 72, lysine 75, threonine 76, serine 77, 138–140 (EDF), arginine 181, tyrosine 191, and arginine 228. Threonine 76 is a binding site for Mg(2+). The small ATPAse domain (RuvB-S) stretch occupies residues 192-262 (EPAELKQILM…IAHAALAVYD (71 aa)). The head domain (RuvB-H) stretch occupies residues 265–365 (QLGLDRLDRS…QASLFDPEDP (101 aa)). 2 residues coordinate DNA: arginine 320 and arginine 325.

This sequence belongs to the RuvB family. As to quaternary structure, homohexamer. Forms an RuvA(8)-RuvB(12)-Holliday junction (HJ) complex. HJ DNA is sandwiched between 2 RuvA tetramers; dsDNA enters through RuvA and exits via RuvB. An RuvB hexamer assembles on each DNA strand where it exits the tetramer. Each RuvB hexamer is contacted by two RuvA subunits (via domain III) on 2 adjacent RuvB subunits; this complex drives branch migration. In the full resolvosome a probable DNA-RuvA(4)-RuvB(12)-RuvC(2) complex forms which resolves the HJ.

Its subcellular location is the cytoplasm. It catalyses the reaction ATP + H2O = ADP + phosphate + H(+). Functionally, the RuvA-RuvB-RuvC complex processes Holliday junction (HJ) DNA during genetic recombination and DNA repair, while the RuvA-RuvB complex plays an important role in the rescue of blocked DNA replication forks via replication fork reversal (RFR). RuvA specifically binds to HJ cruciform DNA, conferring on it an open structure. The RuvB hexamer acts as an ATP-dependent pump, pulling dsDNA into and through the RuvAB complex. RuvB forms 2 homohexamers on either side of HJ DNA bound by 1 or 2 RuvA tetramers; 4 subunits per hexamer contact DNA at a time. Coordinated motions by a converter formed by DNA-disengaged RuvB subunits stimulates ATP hydrolysis and nucleotide exchange. Immobilization of the converter enables RuvB to convert the ATP-contained energy into a lever motion, pulling 2 nucleotides of DNA out of the RuvA tetramer per ATP hydrolyzed, thus driving DNA branch migration. The RuvB motors rotate together with the DNA substrate, which together with the progressing nucleotide cycle form the mechanistic basis for DNA recombination by continuous HJ branch migration. Branch migration allows RuvC to scan DNA until it finds its consensus sequence, where it cleaves and resolves cruciform DNA. This Rhodococcus opacus (strain B4) protein is Holliday junction branch migration complex subunit RuvB.